Reading from the N-terminus, the 317-residue chain is Transaldolase (317 aa).

Catalysis depends on K126, which acts as the Schiff-base intermediate with substrate.

The protein belongs to the transaldolase family. Type 1 subfamily. In terms of assembly, homodimer.

It localises to the cytoplasm. It carries out the reaction D-sedoheptulose 7-phosphate + D-glyceraldehyde 3-phosphate = D-erythrose 4-phosphate + beta-D-fructose 6-phosphate. The protein operates within carbohydrate degradation; pentose phosphate pathway; D-glyceraldehyde 3-phosphate and beta-D-fructose 6-phosphate from D-ribose 5-phosphate and D-xylulose 5-phosphate (non-oxidative stage): step 2/3. Functionally, transaldolase is important for the balance of metabolites in the pentose-phosphate pathway. This chain is Transaldolase, found in Burkholderia vietnamiensis (strain G4 / LMG 22486) (Burkholderia cepacia (strain R1808)).